Here is a 61-residue protein sequence, read N- to C-terminus: Small ribosomal subunit protein uS14 (61 aa).

Zn(2+)-binding residues include Cys24, Cys27, Cys40, and Cys43.

The protein belongs to the universal ribosomal protein uS14 family. Zinc-binding uS14 subfamily. In terms of assembly, part of the 30S ribosomal subunit. Contacts proteins S3 and S10. The cofactor is Zn(2+).

Functionally, binds 16S rRNA, required for the assembly of 30S particles and may also be responsible for determining the conformation of the 16S rRNA at the A site. This Staphylococcus aureus (strain USA300 / TCH1516) protein is Small ribosomal subunit protein uS14.